The sequence spans 430 residues: Serine--tRNA ligase (430 aa).

The disordered stretch occupies residues 44-65 (TESLQAERNSRSKSIGAAKARG). Residue 237-239 (TAE) coordinates L-serine. 268–270 (RSE) contributes to the ATP binding site. Glu291 lines the L-serine pocket. ATP is bound at residue 355 to 358 (EISS). An L-serine-binding site is contributed by Ser391.

This sequence belongs to the class-II aminoacyl-tRNA synthetase family. Type-1 seryl-tRNA synthetase subfamily. As to quaternary structure, homodimer. The tRNA molecule binds across the dimer.

The protein localises to the cytoplasm. The catalysed reaction is tRNA(Ser) + L-serine + ATP = L-seryl-tRNA(Ser) + AMP + diphosphate + H(+). It carries out the reaction tRNA(Sec) + L-serine + ATP = L-seryl-tRNA(Sec) + AMP + diphosphate + H(+). It participates in aminoacyl-tRNA biosynthesis; selenocysteinyl-tRNA(Sec) biosynthesis; L-seryl-tRNA(Sec) from L-serine and tRNA(Sec): step 1/1. Its function is as follows. Catalyzes the attachment of serine to tRNA(Ser). Is also able to aminoacylate tRNA(Sec) with serine, to form the misacylated tRNA L-seryl-tRNA(Sec), which will be further converted into selenocysteinyl-tRNA(Sec). The chain is Serine--tRNA ligase from Edwardsiella ictaluri (strain 93-146).